The following is a 635-amino-acid chain: MAKWTINDSSKIYNIDNWGAELFSINKKGNVCVHPSPNSKYSIDLKVLVDDLIKRKIKPPILLRFMNILEGRIASISRVFKNAISDNNYPAKYQTFYPIKVNQQRQVVEAIANFGKKYNIGLEVGSKPELVAAISMSTGNNLPILCNGYKDTEFIETVLFATRVGYDITIVVEKLFELEKIVEVSKRTGIVPKLGIRVKLSSKGIGKWSTSGGDDAKFGLRISELIAAIDMLKQNDMLDSVKLLHFHVGSQITKIDKIKNALIEGTRIYAEMRKLGVNLEFLDIGGGLGVDYDGSKSSYFSSVNYSLEEYANDVIYQVKNICDDAGVPCPNIISESGRATVAHYSVLVTDVLNNNTQTLMPDFESILTEPEKLSPTVKKLVDIYKSIDKHSLREDYHDTIQLIQESVSLFNLGYLNMAERANAEWICSKIIRKINSIVEKMKPIPDELQNFQLSLRQTYFANFSLFQSIPDSWAIDQLFPIVPIQRLDEKPDVLTSIADITCDSDGEITSFVGENGRTKALPLHKIKVDEQYYIGFFLIGAYQEILGDMHNLFGDTNAVHITFNKKTNYKIDTVISGDATWESLKYVQYDSQEILKRVRNNLEKDVSLQKVSIEESSHFLELLDKTLQSYTYLGE.

An N6-(pyridoxal phosphate)lysine modification is found at K100. 282 to 292 provides a ligand contact to substrate; sequence LDIGGGLGVDY.

This sequence belongs to the Orn/Lys/Arg decarboxylase class-II family. SpeA subfamily. The cofactor is Mg(2+). Pyridoxal 5'-phosphate is required as a cofactor.

The catalysed reaction is L-arginine + H(+) = agmatine + CO2. It functions in the pathway amine and polyamine biosynthesis; agmatine biosynthesis; agmatine from L-arginine: step 1/1. Its function is as follows. Catalyzes the biosynthesis of agmatine from arginine. In Citrifermentans bemidjiense (strain ATCC BAA-1014 / DSM 16622 / JCM 12645 / Bem) (Geobacter bemidjiensis), this protein is Biosynthetic arginine decarboxylase (speA).